The chain runs to 213 residues: GTP cyclohydrolase 1 (213 aa).

Residues C104, H107, and C175 each contribute to the Zn(2+) site.

The protein belongs to the GTP cyclohydrolase I family. Homomer.

It catalyses the reaction GTP + H2O = 7,8-dihydroneopterin 3'-triphosphate + formate + H(+). It participates in cofactor biosynthesis; 7,8-dihydroneopterin triphosphate biosynthesis; 7,8-dihydroneopterin triphosphate from GTP: step 1/1. This Brucella suis (strain ATCC 23445 / NCTC 10510) protein is GTP cyclohydrolase 1.